The primary structure comprises 107 residues: Quaternary ammonium compound-resistance protein QacC (107 aa).

The next 3 helical transmembrane spans lie at 26–46 (FSKF…FYFL), 57–77 (ITYA…SIII), and 84–104 (LITI…NIFG).

Belongs to the drug/metabolite transporter (DMT) superfamily. Small multidrug resistance (SMR) (TC 2.A.7.1) family.

Its subcellular location is the cell membrane. Multidrug exporter. Is implicated for the resistance to bacteriocidal quaternary ammonium compounds. The protein is Quaternary ammonium compound-resistance protein QacC of Staphylococcus sp. (strain ST827).